The sequence spans 33 residues: Putative tumor antigen NA88-A (33 aa).

In terms of tissue distribution, expressed in testis and melanoma cell lines.

The protein is Putative tumor antigen NA88-A (VENTXP1) of Homo sapiens (Human).